Here is a 394-residue protein sequence, read N- to C-terminus: T-cell acute lymphocytic leukemia protein 1 (394 aa).

Residues 1–17 show a composition bias toward basic and acidic residues; sequence MSLKMMERLSTDMDGTR. Residues 1 to 49 form a disordered region; the sequence is MSLKMMERLSTDMDGTRDVASPPARQDAAEPERTVELSGVKEGAAPNSP. Tandem repeats lie at residues 83–89, 94–100, 105–111, 116–122, 127–133, 149–155, and 167–173. The tract at residues 83-173 is 7 X 7 AA approximate repeats of [TS]-E-L-C-R-[AP]-P; the sequence is TELCRATLTP…TATTELCRPP (91 aa). A bHLH domain is found at 262–314; it reads VRRIFTNSRERWRQQNVNGAFAELRKLIPTHPPDKKLSKNEILRLAMKYINFL. A disordered region spans residues 347–394; that stretch reads LSPNSSCGSSLDGAPSPDSYSEEHDALDSKHSRNLHQAMLPIDGSGQR. Over residues 367-377 the composition is skewed to basic and acidic residues; that stretch reads SEEHDALDSKH.

As to expression, first expressed in patches on the ventral side of the embryo in a region that will give rise to hematopoietic tissue. By late neurula stages, expressed throughout the ventral blood island region. By tailbud stages, expression extends to probable vascular progenitor cells, but is excluded from the presumptive liver anlage. Also expressed in the central nervous system at the tailbud stage.

It is found in the nucleus. In terms of biological role, transcription factor that acts synergistically with lmo2 and gata1 to specify embryonic dorsal mesoderm to a hematopoietic fate. The protein is T-cell acute lymphocytic leukemia protein 1 of Xenopus laevis (African clawed frog).